The chain runs to 486 residues: UDP-GalNAc:beta-1,3-N-acetylgalactosaminyltransferase 2 (486 aa).

Residues 1–10 (MRHLLFLCPC) are Cytoplasmic-facing. A helical; Signal-anchor for type II membrane protein membrane pass occupies residues 11-31 (VIGVAFHLWLFNFSGLFSWFL). Residues 32–486 (VWSPHSYDIV…CGNPCACEDR (455 aa)) are Lumenal-facing. Residues N103 and N160 are each glycosylated (N-linked (GlcNAc...) asparagine).

The protein belongs to the glycosyltransferase 31 family.

The protein resides in the golgi apparatus membrane. It is found in the endoplasmic reticulum. It catalyses the reaction 3-O-(N-acetyl-beta-D-glucosaminyl-(1-&gt;4)-alpha-D-mannosyl)-L-threonyl-[protein] + UDP-N-acetyl-alpha-D-galactosamine = 3-O-[beta-D-GalNAc-(1-&gt;3)-beta-D-GlcNAc-(1-&gt;4)-alpha-D-Man]-L-Thr-[protein] + UDP + H(+). The protein operates within protein modification; protein glycosylation. Beta-1,3-N-acetylgalactosaminyltransferase that synthesizes a unique carbohydrate structure, GalNAc-beta-1-3GlcNAc, on N- and O-glycans. Has no galactose nor galactosaminyl transferase activity toward any acceptor substrate. Involved in alpha-dystroglycan (dag1) glycosylation. This Xenopus laevis (African clawed frog) protein is UDP-GalNAc:beta-1,3-N-acetylgalactosaminyltransferase 2 (b3galnt2).